Consider the following 336-residue polypeptide: D-alanine--D-alanine ligase (336 aa).

An ATP-grasp domain is found at 124-330; it reads KMWFSALGIP…FATFLEQAIL (207 aa). An ATP-binding site is contributed by 154-209; sequence AFDEWGSVFIKAASQGSSVGCFPAHRREDIPGLVRKAFEYAPFVVVEKTIKARELE. Mg(2+)-binding residues include Asp284, Glu297, and Asn299.

Belongs to the D-alanine--D-alanine ligase family. The cofactor is Mg(2+). It depends on Mn(2+) as a cofactor.

The protein localises to the cytoplasm. The catalysed reaction is 2 D-alanine + ATP = D-alanyl-D-alanine + ADP + phosphate + H(+). It participates in cell wall biogenesis; peptidoglycan biosynthesis. Its function is as follows. Cell wall formation. This is D-alanine--D-alanine ligase from Shewanella amazonensis (strain ATCC BAA-1098 / SB2B).